The following is a 1235-amino-acid chain: MNTKWTETQKSAIFTPNCNLLVAAGAGTGKTAVLVERILQKVINDSEEVDIDKLLVVTFTNAAASEMKERVGEALSKLLELNCTSKNLQRQLALLNQSNIMTIHSFCLKVIKNNFHRIDLDPNFRICDDTESKLLKQDALLELFEEKYEEENLGFLNLADGYGGKNDSKLQDIVLSLYEFSQGSPWPKRWLQDVLKDFNLGSDFDFGDTKWAKVLMHNVTVELKGCKNKMKNILNTIENIEGLEHYLEPFKSDIESIDKLINITTWDEIRDEFIKLSFNKLPSKRTDPLVKSYKDKARNTRDEVKKKLISIREDIILCTDDIYENFKEVYPLMKSLTFLVMDFYEKYHNKKSERNMIDFNDIEHFCLEILTSKDKNGDIIPSEAALEYREYFEEIFIDEYQDSNEVQEVIMNMISRKNIYANLFMVGDVKQSIYRFRQARPELFLEKYNSYDEKEGSKNRKIKLSENFRSRKEIIDAINYIFKQIMCREVGELDYGEEECLKSSARYEPFEGNCGGDVELHVVDKKENENKLEDENEEELLDAISVEARLVASKINELVNPSLDQYSFKVYDKEIDNYRSIMYKDIVILMRATQNWAPAFVEELNNSGIPVFADTSVGYFQAIEIKTIISLLQIIDNPLQDIPFIALLRSPIGGFSPEDLIDLRVVNREISFYEILKAIKEHSLELKYSLEHIDERLEYKVEQFFNKLCLWRRKVIHMPIDEFIWHIYIETGYYGFVGAMPGGIQRQANLRMLFERAKQYKNISYKGLFNFINFINKLKSSSTDMGNAKILGENENVVRIMSIHKSKGLEFPVIILSGAGKRFNLTDINKSVLFHKELGLGPEYVNSERHISYPTIVKQVLKRKLKMETLSEEMRILYVAFTRAKEKLIITGTVDNIENTFQRWCEAAYCEEDKLPEYSLINSRNFLDWIGPAVARHPCGEIIRKVCPFEYNLNLITGDDSKWKVFVYSKDNFKSTLDENIDEDIIGKIKSLELDNNKEIYKNEVYRRLNWTYKYEQSSKIAAKFSVSELKRRFKLIDTENGIEFMEPIYLKKPAFLRESKGLTPSERGIVMHLVMQHIDIDKVGSYEQIKEQVDKLVFREFITEAEAKSISVYKIIKFFNSEIGIRMKKSNNVYREVPFYMEIESTELYKQLPQHIYRDEKVLIQGIIDCYFEENNELILVDYKTDHVGDIDSIKEKYQVQIYYYGRALEKLTGKKVKKKYLYLFSKDYILDLS.

In terms of domain architecture, UvrD-like helicase ATP-binding spans 3 to 471 (TKWTETQKSA…IKLSENFRSR (469 aa)). 24–31 (AGAGTGKT) lines the ATP pocket. The UvrD-like helicase C-terminal domain maps to 509–808 (PFEGNCGGDV…RIMSIHKSKG (300 aa)).

The protein belongs to the helicase family. AddA subfamily. Heterodimer of AddA and AddB/RexB. It depends on Mg(2+) as a cofactor.

It catalyses the reaction Couples ATP hydrolysis with the unwinding of duplex DNA by translocating in the 3'-5' direction.. The catalysed reaction is ATP + H2O = ADP + phosphate + H(+). Functionally, the heterodimer acts as both an ATP-dependent DNA helicase and an ATP-dependent, dual-direction single-stranded exonuclease. Recognizes the chi site generating a DNA molecule suitable for the initiation of homologous recombination. The AddA nuclease domain is required for chi fragment generation; this subunit has the helicase and 3' -&gt; 5' nuclease activities. This Clostridium kluyveri (strain ATCC 8527 / DSM 555 / NBRC 12016 / NCIMB 10680 / K1) protein is ATP-dependent helicase/nuclease subunit A.